A 67-amino-acid polypeptide reads, in one-letter code: ATP synthase F(0) complex subunit 8 (67 aa).

The chain crosses the membrane as a helical span at residues 8 to 24 (TWFITITSMIMTLFILF). Residue lysine 54 is modified to N6-acetyllysine; alternate. Position 54 is an N6-succinyllysine; alternate (lysine 54). Lysine 57 carries the N6-acetyllysine modification.

The protein belongs to the ATPase protein 8 family. As to quaternary structure, component of the ATP synthase complex composed at least of ATP5F1A/subunit alpha, ATP5F1B/subunit beta, ATP5MC1/subunit c (homooctomer), MT-ATP6/subunit a, MT-ATP8/subunit 8, ATP5ME/subunit e, ATP5MF/subunit f, ATP5MG/subunit g, ATP5MK/subunit k, ATP5MJ/subunit j, ATP5F1C/subunit gamma, ATP5F1D/subunit delta, ATP5F1E/subunit epsilon, ATP5PF/subunit F6, ATP5PB/subunit b, ATP5PD/subunit d, ATP5PO/subunit OSCP. ATP synthase complex consists of a soluble F(1) head domain (subunits alpha(3) and beta(3)) - the catalytic core - and a membrane F(0) domain - the membrane proton channel (subunits c, a, 8, e, f, g, k and j). These two domains are linked by a central stalk (subunits gamma, delta, and epsilon) rotating inside the F1 region and a stationary peripheral stalk (subunits F6, b, d, and OSCP). Interacts with PRICKLE3.

The protein localises to the mitochondrion membrane. Subunit 8, of the mitochondrial membrane ATP synthase complex (F(1)F(0) ATP synthase or Complex V) that produces ATP from ADP in the presence of a proton gradient across the membrane which is generated by electron transport complexes of the respiratory chain. ATP synthase complex consist of a soluble F(1) head domain - the catalytic core - and a membrane F(1) domain - the membrane proton channel. These two domains are linked by a central stalk rotating inside the F(1) region and a stationary peripheral stalk. During catalysis, ATP synthesis in the catalytic domain of F(1) is coupled via a rotary mechanism of the central stalk subunits to proton translocation. In vivo, can only synthesize ATP although its ATP hydrolase activity can be activated artificially in vitro. Part of the complex F(0) domain. The protein is ATP synthase F(0) complex subunit 8 of Sus scrofa (Pig).